A 205-amino-acid polypeptide reads, in one-letter code: Guanylyl cyclase-activating protein 1 (205 aa).

A lipid anchor (N-myristoyl glycine) is attached at glycine 2. A Deamidated asparagine modification is found at asparagine 3. EF-hand domains are found at residues 30 to 48, 50 to 85, 86 to 121, and 129 to 164; these read SGQL…KNLS, ASNQ…VLKG, KVEQ…IRAI, and TAEE…DELL. Positions 63, 65, 67, 69, 74, 99, 101, 103, 105, 110, 142, 144, 146, 148, and 153 each coordinate Ca(2+).

Retina.

Functionally, regulatory protein that inhibits guanylyl cyclase when free calcium ions concentration is elevated. This Ca(2+)-sensitive regulation of retinal guanylyl cyclase is a key event in recovery of the dark state of rod photoreceptors following light exposure. The polypeptide is Guanylyl cyclase-activating protein 1 (GUCA1A) (Lithobates pipiens (Northern leopard frog)).